The chain runs to 358 residues: 3-dehydroquinate synthase (358 aa).

Residues 105–109 (GVVGD), 129–130 (TT), K142, K151, and 169–172 (TLKT) each bind NAD(+). E184, H245, and H262 together coordinate Zn(2+).

This sequence belongs to the sugar phosphate cyclases superfamily. Dehydroquinate synthase family. NAD(+) serves as cofactor. Co(2+) is required as a cofactor. Requires Zn(2+) as cofactor.

The protein resides in the cytoplasm. It carries out the reaction 7-phospho-2-dehydro-3-deoxy-D-arabino-heptonate = 3-dehydroquinate + phosphate. It participates in metabolic intermediate biosynthesis; chorismate biosynthesis; chorismate from D-erythrose 4-phosphate and phosphoenolpyruvate: step 2/7. In terms of biological role, catalyzes the conversion of 3-deoxy-D-arabino-heptulosonate 7-phosphate (DAHP) to dehydroquinate (DHQ). The protein is 3-dehydroquinate synthase of Enterococcus faecalis (strain ATCC 47077 / OG1RF).